The chain runs to 70 residues: NADH-ubiquinone oxidoreductase chain 3 (70 aa).

The helical transmembrane segment at phenylalanine 42–methionine 62 threads the bilayer.

It belongs to the complex I subunit 3 family.

It localises to the mitochondrion membrane. It catalyses the reaction a ubiquinone + NADH + 5 H(+)(in) = a ubiquinol + NAD(+) + 4 H(+)(out). In terms of biological role, core subunit of the mitochondrial membrane respiratory chain NADH dehydrogenase (Complex I) that is believed to belong to the minimal assembly required for catalysis. Complex I functions in the transfer of electrons from NADH to the respiratory chain. The immediate electron acceptor for the enzyme is believed to be ubiquinone. The protein is NADH-ubiquinone oxidoreductase chain 3 (ND3) of Artemia salina (Brine shrimp).